The chain runs to 569 residues: MTVPSDITIAQNATLRPIVDIAKKIGLSADKIEPYGYYKAKINPNDVFDMPAKSSNSKLVLVTAINPTPAGEGKTTVTIGLADALNRVHHQDQNGKRTVVALREPSVGPVFGIKGGAAGGGYAQVLPMEDINLHFTGDLHAIGAANNLLAALIDNHIYQGNALNIDPKQVVWRRAVDMNDRQLRNTVTGLGKPADGVMREDGFDITVASEVMAIFCLATDLADLKQRLGNILVAYNQDKQPIYAKDLKAHGAMAALLKDAIKPNLVQTIEGTPAILHGGPFANIAHGCNSVIATRTAMHLADYTLTEAGFGADLGAEKFCDIKCRLAGLTPDAAVVVATIRALKYNGGAAKDALKNEDLTALEQGLPNLTKHIENLQEVFGLPVVVAINQFESDTAAEIEMVRKACKRLKVEVALTQVWEKGGAGGEDLARTLLALLETHNDQPQTFGFAYDSNKPIVNKIRTVAQRIYGANDVDISVTAAAKIKRLEALGLDKMPICIAKTQYSLSDDAKLLGRPTGFNIHVRDISVSNGAGFIVVICGPIMKMPGLPKYPSAENIDVDEKGNITGLF.

Position 68 to 75 (68 to 75 (TPAGEGKT)) interacts with ATP.

This sequence belongs to the formate--tetrahydrofolate ligase family.

The enzyme catalyses (6S)-5,6,7,8-tetrahydrofolate + formate + ATP = (6R)-10-formyltetrahydrofolate + ADP + phosphate. It participates in one-carbon metabolism; tetrahydrofolate interconversion. The protein is Formate--tetrahydrofolate ligase of Psychrobacter sp. (strain PRwf-1).